Here is a 238-residue protein sequence, read N- to C-terminus: Large ribosomal subunit protein uL2 (238 aa).

Residues 203–223 (GGGAWKHPGKPTTVSRNAPPG) form a disordered region.

This sequence belongs to the universal ribosomal protein uL2 family. As to quaternary structure, part of the 50S ribosomal subunit. Forms a bridge to the 30S subunit in the 70S ribosome.

In terms of biological role, one of the primary rRNA binding proteins. Required for association of the 30S and 50S subunits to form the 70S ribosome, for tRNA binding and peptide bond formation. It has been suggested to have peptidyltransferase activity; this is somewhat controversial. Makes several contacts with the 16S rRNA in the 70S ribosome. This is Large ribosomal subunit protein uL2 from Methanosarcina barkeri (strain Fusaro / DSM 804).